The following is an 830-amino-acid chain: Probable glucan 1,3-beta-glucosidase D (830 aa).

Composition is skewed to basic and acidic residues over residues 1–11 (MPGHSRSRDRL) and 74–84 (VHEHDHDHEYD). 3 disordered regions span residues 1 to 91 (MPGH…EEPW), 127 to 163 (MSGA…QRRK), and 260 to 297 (GGPG…STSA). Over 1 to 307 (MPGHSRSRDR…RPSFWKRYHK (307 aa)) the chain is Cytoplasmic. The segment covering 147-163 (GKGKKRLDRETRRQRRK) has biased composition (basic residues). Residues 308–328 (TFIFFAILIVLAAIAIPVGII) traverse the membrane as a helical; Signal-anchor for type II membrane protein segment. Topologically, residues 329–830 (EARRLHGTSG…PSFGNLPEYY (502 aa)) are extracellular. N-linked (GlcNAc...) asparagine glycosylation is found at N341, N376, N381, N393, N397, N546, and N558. The active-site Proton donor is E597. 3 N-linked (GlcNAc...) asparagine glycosylation sites follow: N610, N669, and N689. The active-site Nucleophile is E702.

This sequence belongs to the glycosyl hydrolase 5 (cellulase A) family.

The protein localises to the cell membrane. The catalysed reaction is Successive hydrolysis of beta-D-glucose units from the non-reducing ends of (1-&gt;3)-beta-D-glucans, releasing alpha-glucose.. Glucosidase involved in the degradation of cellulosic biomass. Active on lichenan. The polypeptide is Probable glucan 1,3-beta-glucosidase D (exgD) (Aspergillus niger (strain ATCC MYA-4892 / CBS 513.88 / FGSC A1513)).